A 187-amino-acid polypeptide reads, in one-letter code: Ribosome-recycling factor (187 aa).

This sequence belongs to the RRF family.

The protein localises to the cytoplasm. Functionally, responsible for the release of ribosomes from messenger RNA at the termination of protein biosynthesis. May increase the efficiency of translation by recycling ribosomes from one round of translation to another. The protein is Ribosome-recycling factor of Petrotoga mobilis (strain DSM 10674 / SJ95).